The chain runs to 333 residues: Ketol-acid reductoisomerase (NADP(+)) (333 aa).

In terms of domain architecture, KARI N-terminal Rossmann spans M1–T171. NADP(+) contacts are provided by residues Y14–Q17, R37, T42, and D72–Q75. H97 is an active-site residue. G123 contacts NADP(+). The KARI C-terminal knotted domain occupies T172–L317. Mg(2+)-binding residues include D180, E184, E216, and E220. Position 241 (S241) interacts with substrate.

The protein belongs to the ketol-acid reductoisomerase family. It depends on Mg(2+) as a cofactor.

It catalyses the reaction (2R)-2,3-dihydroxy-3-methylbutanoate + NADP(+) = (2S)-2-acetolactate + NADPH + H(+). The catalysed reaction is (2R,3R)-2,3-dihydroxy-3-methylpentanoate + NADP(+) = (S)-2-ethyl-2-hydroxy-3-oxobutanoate + NADPH + H(+). It functions in the pathway amino-acid biosynthesis; L-isoleucine biosynthesis; L-isoleucine from 2-oxobutanoate: step 2/4. The protein operates within amino-acid biosynthesis; L-valine biosynthesis; L-valine from pyruvate: step 2/4. In terms of biological role, involved in the biosynthesis of branched-chain amino acids (BCAA). Catalyzes an alkyl-migration followed by a ketol-acid reduction of (S)-2-acetolactate (S2AL) to yield (R)-2,3-dihydroxy-isovalerate. In the isomerase reaction, S2AL is rearranged via a Mg-dependent methyl migration to produce 3-hydroxy-3-methyl-2-ketobutyrate (HMKB). In the reductase reaction, this 2-ketoacid undergoes a metal-dependent reduction by NADPH to yield (R)-2,3-dihydroxy-isovalerate. The chain is Ketol-acid reductoisomerase (NADP(+)) from Xanthomonas oryzae pv. oryzae (strain MAFF 311018).